Here is a 908-residue protein sequence, read N- to C-terminus: Isoleucine--tRNA ligase (908 aa).

The short motif at 59 to 69 (PYANGDLHIGH) is the 'HIGH' region element. L-isoleucyl-5'-AMP is bound at residue glutamate 554. The 'KMSKS' region signature appears at 595-599 (KMSKS). An ATP-binding site is contributed by lysine 598. Residues cysteine 882, cysteine 885, cysteine 898, and cysteine 901 each contribute to the Zn(2+) site.

Belongs to the class-I aminoacyl-tRNA synthetase family. IleS type 1 subfamily. As to quaternary structure, monomer. It depends on Zn(2+) as a cofactor.

Its subcellular location is the cytoplasm. The enzyme catalyses tRNA(Ile) + L-isoleucine + ATP = L-isoleucyl-tRNA(Ile) + AMP + diphosphate. In terms of biological role, catalyzes the attachment of isoleucine to tRNA(Ile). As IleRS can inadvertently accommodate and process structurally similar amino acids such as valine, to avoid such errors it has two additional distinct tRNA(Ile)-dependent editing activities. One activity is designated as 'pretransfer' editing and involves the hydrolysis of activated Val-AMP. The other activity is designated 'posttransfer' editing and involves deacylation of mischarged Val-tRNA(Ile). The sequence is that of Isoleucine--tRNA ligase from Mesoplasma florum (strain ATCC 33453 / NBRC 100688 / NCTC 11704 / L1) (Acholeplasma florum).